A 331-amino-acid polypeptide reads, in one-letter code: Benzylsuccinate synthase activating enzyme (331 aa).

Residues 15-315 enclose the Radical SAM core domain; the sequence is QDGPGIRTTI…VTIGGIVGIA (301 aa). Positions 29, 33, 36, 55, 58, 61, 65, 89, 92, 95, and 99 each coordinate [4Fe-4S] cluster. An S-adenosyl-L-methionine-binding site is contributed by 35–37; it reads WCH. 4Fe-4S ferredoxin-type domains follow at residues 46–75 and 80–109; these read QEFY…LVRN and TIVQ…IVGQ. S-adenosyl-L-methionine is bound by residues Gly-139, 189–191, and His-263; that span reads DLK.

It belongs to the organic radical-activating enzymes family. [4Fe-4S] cluster serves as cofactor.

It carries out the reaction glycyl-[protein] + reduced [flavodoxin] + S-adenosyl-L-methionine = glycin-2-yl radical-[protein] + semiquinone [flavodoxin] + 5'-deoxyadenosine + L-methionine + H(+). It participates in xenobiotic degradation; toluene degradation [regulation]. Activation of benzylsuccinate synthase under anaerobic conditions by generation of an organic free radical, using S-adenosylmethionine and reduced flavodoxin as cosubstrates to produce 5'-deoxy-adenosine. This is Benzylsuccinate synthase activating enzyme (bssD) from Thauera aromatica.